The sequence spans 105 residues: Thioredoxin (105 aa).

Residues valine 2–glycine 103 form the Thioredoxin domain. N6-acetyllysine is present on lysine 3. Lysine 8 carries the post-translational modification N6-succinyllysine. Active-site nucleophile residues include cysteine 32 and cysteine 35. Residues cysteine 32 and cysteine 35 are joined by a disulfide bond. Lysine 39 carries the post-translational modification N6-acetyllysine. S-nitrosocysteine is present on residues cysteine 62 and cysteine 69. Cysteine 73 carries the S-nitrosocysteine; alternate modification. The residue at position 94 (lysine 94) is an N6-acetyllysine; alternate. Residue lysine 94 is modified to N6-succinyllysine; alternate.

The protein belongs to the thioredoxin family. In terms of assembly, homodimer; disulfide-linked. Interacts with TXNIP through the redox-active site. Interacts with MAP3K5 and CASP3. Interacts with APEX1; the interaction stimulates the FOS/JUN AP-1 DNA-binding activity in a redox-dependent manner. Post-translationally, in the fully reduced protein, both Cys-69 and Cys-73 are nitrosylated in response to nitric oxide (NO). When two disulfide bonds are present in the protein, only Cys-73 is nitrosylated. Cys-73 can serve as donor for nitrosylation of target proteins.

It localises to the nucleus. The protein resides in the cytoplasm. Its subcellular location is the secreted. Functionally, participates in various redox reactions through the reversible oxidation of its active center dithiol to a disulfide and catalyzes dithiol-disulfide exchange reactions. Plays a role in the reversible S-nitrosylation of cysteine residues in target proteins, and thereby contributes to the response to intracellular nitric oxide. Nitrosylates the active site Cys of CASP3 in response to nitric oxide (NO), and thereby inhibits caspase-3 activity. Induces the FOS/JUN AP-1 DNA binding activity in ionizing radiation (IR) cells through its oxidation/reduction status and stimulates AP-1 transcriptional activity. The protein is Thioredoxin (TXN) of Equus caballus (Horse).